Reading from the N-terminus, the 291-residue chain is ATP synthase gamma chain (291 aa).

The protein belongs to the ATPase gamma chain family. As to quaternary structure, F-type ATPases have 2 components, CF(1) - the catalytic core - and CF(0) - the membrane proton channel. CF(1) has five subunits: alpha(3), beta(3), gamma(1), delta(1), epsilon(1). CF(0) has three main subunits: a, b and c.

The protein resides in the cell inner membrane. In terms of biological role, produces ATP from ADP in the presence of a proton gradient across the membrane. The gamma chain is believed to be important in regulating ATPase activity and the flow of protons through the CF(0) complex. In Burkholderia thailandensis (strain ATCC 700388 / DSM 13276 / CCUG 48851 / CIP 106301 / E264), this protein is ATP synthase gamma chain.